Reading from the N-terminus, the 445-residue chain is ATP synthase subunit b-delta (445 aa).

The tract at residues 1 to 168 is ATP synthase subunit b; it reads MSIFIGQLIG…PSSAVLEAGA (168 aa). Residues 3–23 traverse the membrane as a helical segment; that stretch reads IFIGQLIGFAVIVFILVKWVV. The ATP synthase subunit delta stretch occupies residues 169 to 445; the sequence is SLNLRAASRE…LAAARTGLPD (277 aa).

The protein in the N-terminal section; belongs to the ATPase B chain family. It in the C-terminal section; belongs to the ATPase delta chain family. F-type ATPases have 2 components, F(1) - the catalytic core - and F(0) - the membrane proton channel. F(1) has five subunits: alpha(3), beta(3), gamma(1), delta(1), epsilon(1). F(0) has three main subunits: a(1), b(2) and c(10-14). The alpha and beta chains form an alternating ring which encloses part of the gamma chain. F(1) is attached to F(0) by a central stalk formed by the gamma and epsilon chains, while a peripheral stalk is formed by the delta and b chains.

It localises to the cell membrane. Functionally, f(1)F(0) ATP synthase produces ATP from ADP in the presence of a proton or sodium gradient. F-type ATPases consist of two structural domains, F(1) containing the extramembraneous catalytic core and F(0) containing the membrane proton channel, linked together by a central stalk and a peripheral stalk. During catalysis, ATP synthesis in the catalytic domain of F(1) is coupled via a rotary mechanism of the central stalk subunits to proton translocation. Its function is as follows. This fusion protein includes a component of the F(0) channel (subunit b) and of the F(1) subunit (subunit delta). Two copies of subunit b and one of delta together form the peripheral 'stator' stalk which links F(1) to F(0). The protein is ATP synthase subunit b-delta (atpFH) of Mycolicibacterium vanbaalenii (strain DSM 7251 / JCM 13017 / BCRC 16820 / KCTC 9966 / NRRL B-24157 / PYR-1) (Mycobacterium vanbaalenii).